A 276-amino-acid polypeptide reads, in one-letter code: Src-like-adapter (276 aa).

The N-myristoyl glycine moiety is linked to residue glycine 2. The SH3 domain occupies leucine 22–histidine 82. Positions tryptophan 84–cysteine 175 constitute an SH2 domain. The interval glutamate 212–aspartate 276 is SLA C-terminal. Serine 253 carries the post-translational modification Phosphoserine. Position 273 is a phosphotyrosine (tyrosine 273).

In terms of assembly, interacts with EPHA2, VAV1, LCP2 and PDGFRB. Homodimer. Homodimerization and interaction with phosphorylated CBL occurs via its C-terminal domain. Interacts with phosphorylated proteins ZAP70, CD3Z, SYK and LAT via its SH2 domain. In terms of tissue distribution, expressed in lung and fetal brain. Weakly expressed in heart, adult brain, placenta, liver, skeletal muscle, kidney and pancreas.

It localises to the cytoplasm. The protein resides in the endosome. In terms of biological role, adapter protein, which negatively regulates T-cell receptor (TCR) signaling. Inhibits T-cell antigen-receptor induced activation of nuclear factor of activated T-cells. Involved in the negative regulation of positive selection and mitosis of T-cells. May act by linking signaling proteins such as ZAP70 with CBL, leading to a CBL dependent degradation of signaling proteins. The sequence is that of Src-like-adapter (SLA) from Homo sapiens (Human).